Consider the following 344-residue polypeptide: GTPase Obg (344 aa).

Residues 1–159 form the Obg domain; it reads MKFLDEAKVY…MWLILRLKLI (159 aa). The OBG-type G domain occupies 160–327; that stretch reads ADAGLVGLPN…ALRAIQAQLD (168 aa). Residues 166–173, 191–195, 212–215, 279–282, and 308–310 contribute to the GTP site; these read GLPNAGKS, FTTLH, DIPG, SKAD, and SAA. Residues serine 173 and threonine 193 each contribute to the Mg(2+) site.

The protein belongs to the TRAFAC class OBG-HflX-like GTPase superfamily. OBG GTPase family. Monomer. Mg(2+) serves as cofactor.

The protein resides in the cytoplasm. An essential GTPase which binds GTP, GDP and possibly (p)ppGpp with moderate affinity, with high nucleotide exchange rates and a fairly low GTP hydrolysis rate. Plays a role in control of the cell cycle, stress response, ribosome biogenesis and in those bacteria that undergo differentiation, in morphogenesis control. This is GTPase Obg from Methylorubrum populi (strain ATCC BAA-705 / NCIMB 13946 / BJ001) (Methylobacterium populi).